The primary structure comprises 290 residues: ATP synthase gamma chain (290 aa).

This sequence belongs to the ATPase gamma chain family. As to quaternary structure, F-type ATPases have 2 components, CF(1) - the catalytic core - and CF(0) - the membrane proton channel. CF(1) has five subunits: alpha(3), beta(3), gamma(1), delta(1), epsilon(1). CF(0) has three main subunits: a, b and c.

It localises to the cell membrane. Functionally, produces ATP from ADP in the presence of a proton gradient across the membrane. The gamma chain is believed to be important in regulating ATPase activity and the flow of protons through the CF(0) complex. This chain is ATP synthase gamma chain, found in Buchnera aphidicola subsp. Diuraphis noxia.